Here is a 201-residue protein sequence, read N- to C-terminus: MSAAARVLPKAVTFVTGNAKKLEEVRAILGSSVPFQSLKLDLPELQGEPEYISKEKARIAASQVNGPVLVEDTCLCFNALKGLPGPYIKWFLEKIGHEGLNNLLKAYEDKSAFAMCIFSLALGPGEEPITFVGKTAGKIVPARGPNYFGWDPVFQPDGFEQTYAEMPKSVKNNISHRGKALALVKEHFASASYTVQSNDST.

16–21 (TGNAKK) provides a ligand contact to ITP. Position 44 (glutamate 44) interacts with Mg(2+). ITP contacts are provided by residues lysine 56, 72-73 (DT), lysine 89, 148-151 (FGWD), lysine 171, and 176-177 (HR).

The protein belongs to the HAM1 NTPase family. As to quaternary structure, homodimer. Mg(2+) is required as a cofactor. Requires Mn(2+) as cofactor.

It is found in the cytoplasm. It carries out the reaction ITP + H2O = IMP + diphosphate + H(+). It catalyses the reaction dITP + H2O = dIMP + diphosphate + H(+). The catalysed reaction is XTP + H2O = XMP + diphosphate + H(+). Pyrophosphatase that hydrolyzes non-canonical purine nucleotides such as inosine triphosphate (ITP), deoxyinosine triphosphate (dITP) or xanthosine 5'-triphosphate (XTP) to their respective monophosphate derivatives. The enzyme does not distinguish between the deoxy- and ribose forms. Probably excludes non-canonical purines from RNA and DNA precursor pools, thus preventing their incorporation into RNA and DNA and avoiding chromosomal lesions. This Zea mays (Maize) protein is Inosine triphosphate pyrophosphatase.